The following is an 89-amino-acid chain: Small ribosomal subunit protein uS15 (89 aa).

The protein belongs to the universal ribosomal protein uS15 family. Part of the 30S ribosomal subunit. Forms a bridge to the 50S subunit in the 70S ribosome, contacting the 23S rRNA.

In terms of biological role, one of the primary rRNA binding proteins, it binds directly to 16S rRNA where it helps nucleate assembly of the platform of the 30S subunit by binding and bridging several RNA helices of the 16S rRNA. Forms an intersubunit bridge (bridge B4) with the 23S rRNA of the 50S subunit in the ribosome. The polypeptide is Small ribosomal subunit protein uS15 (Chlorobium luteolum (strain DSM 273 / BCRC 81028 / 2530) (Pelodictyon luteolum)).